Consider the following 236-residue polypeptide: DNA repair and recombination protein RadB (236 aa).

Belongs to the eukaryotic RecA-like protein family. RadB subfamily.

Functionally, involved in DNA repair and in homologous recombination. May regulate the cleavage reactions of the branch-structured DNA. Has a very weak ATPase activity that is not stimulated by DNA. Binds DNA but does not promote DNA strands exchange. The protein is DNA repair and recombination protein RadB of Halobacterium salinarum (strain ATCC 29341 / DSM 671 / R1).